Reading from the N-terminus, the 467-residue chain is Mitochondrial distribution and morphology protein 10 (467 aa).

This sequence belongs to the MDM10 family. Component of the ER-mitochondria encounter structure (ERMES) or MDM complex, composed of MMM1, MDM10, MDM12 and MDM34. Associates with the mitochondrial outer membrane sorting assembly machinery SAM(core) complex.

The protein localises to the mitochondrion outer membrane. Component of the ERMES/MDM complex, which serves as a molecular tether to connect the endoplasmic reticulum and mitochondria. Components of this complex are involved in the control of mitochondrial shape and protein biogenesis and may function in phospholipid exchange. MDM10 is involved in the late assembly steps of the general translocase of the mitochondrial outer membrane (TOM complex). Functions in the TOM40-specific route of the assembly of outer membrane beta-barrel proteins, including the association of TOM40 with the receptor TOM22 and small TOM proteins. Can associate with the SAM(core) complex as well as the MDM12-MMM1 complex, both involved in late steps of the major beta-barrel assembly pathway, that is responsible for biogenesis of all outer membrane beta-barrel proteins. May act as a switch that shuttles between both complexes and channels precursor proteins into the TOM40-specific pathway. Plays a role in mitochondrial morphology and in the inheritance of mitochondria. This Ajellomyces capsulatus (strain G186AR / H82 / ATCC MYA-2454 / RMSCC 2432) (Darling's disease fungus) protein is Mitochondrial distribution and morphology protein 10.